The primary structure comprises 338 residues: Lipoate-protein ligase A (338 aa).

One can recognise a BPL/LPL catalytic domain in the interval 29–216 (SPNQRVLFLW…AFFAYYDEQV (188 aa)). ATP contacts are provided by residues arginine 71, 76–79 (GAVF), and lysine 134. (R)-lipoate is bound at residue lysine 134.

This sequence belongs to the LplA family. In terms of assembly, monomer.

It localises to the cytoplasm. The enzyme catalyses L-lysyl-[lipoyl-carrier protein] + (R)-lipoate + ATP = N(6)-[(R)-lipoyl]-L-lysyl-[lipoyl-carrier protein] + AMP + diphosphate + H(+). It functions in the pathway protein modification; protein lipoylation via exogenous pathway; protein N(6)-(lipoyl)lysine from lipoate: step 1/2. The protein operates within protein modification; protein lipoylation via exogenous pathway; protein N(6)-(lipoyl)lysine from lipoate: step 2/2. Functionally, catalyzes both the ATP-dependent activation of exogenously supplied lipoate to lipoyl-AMP and the transfer of the activated lipoyl onto the lipoyl domains of lipoate-dependent enzymes. This chain is Lipoate-protein ligase A, found in Yersinia pseudotuberculosis serotype O:1b (strain IP 31758).